The sequence spans 513 residues: ATP synthase subunit alpha (513 aa).

169–176 (GDRQTGKT) contributes to the ATP binding site.

It belongs to the ATPase alpha/beta chains family. In terms of assembly, F-type ATPases have 2 components, CF(1) - the catalytic core - and CF(0) - the membrane proton channel. CF(1) has five subunits: alpha(3), beta(3), gamma(1), delta(1), epsilon(1). CF(0) has three main subunits: a(1), b(2) and c(9-12). The alpha and beta chains form an alternating ring which encloses part of the gamma chain. CF(1) is attached to CF(0) by a central stalk formed by the gamma and epsilon chains, while a peripheral stalk is formed by the delta and b chains.

It is found in the cell inner membrane. It catalyses the reaction ATP + H2O + 4 H(+)(in) = ADP + phosphate + 5 H(+)(out). In terms of biological role, produces ATP from ADP in the presence of a proton gradient across the membrane. The alpha chain is a regulatory subunit. This chain is ATP synthase subunit alpha, found in Pseudoalteromonas translucida (strain TAC 125).